Here is a 186-residue protein sequence, read N- to C-terminus: Tumor necrosis factor alpha-induced protein 8-like protein 1 (186 aa).

Belongs to the TNFAIP8 family. Interacts with FBXW5; TNFAIP8L1 competes with TSC2 to bind FBXW5 increasing TSC2 stability by preventing its ubiquitination. In terms of tissue distribution, detected in wide variety tissues, such as neurons in brain, hepatocytes, germ cells of female and male reproductive organs, muscular tissues and variety types of cells of the epithelial origin (at protein level).

It is found in the cytoplasm. Functionally, acts as a negative regulator of mTOR activity. This Mus musculus (Mouse) protein is Tumor necrosis factor alpha-induced protein 8-like protein 1 (Tnfaip8l1).